The chain runs to 252 residues: Ubiquinone biosynthesis O-methyltransferase (252 aa).

Residues arginine 45, glycine 76, aspartate 97, and methionine 141 each coordinate S-adenosyl-L-methionine.

The protein belongs to the methyltransferase superfamily. UbiG/COQ3 family.

The catalysed reaction is a 3-demethylubiquinol + S-adenosyl-L-methionine = a ubiquinol + S-adenosyl-L-homocysteine + H(+). The enzyme catalyses a 3-(all-trans-polyprenyl)benzene-1,2-diol + S-adenosyl-L-methionine = a 2-methoxy-6-(all-trans-polyprenyl)phenol + S-adenosyl-L-homocysteine + H(+). It participates in cofactor biosynthesis; ubiquinone biosynthesis. Functionally, O-methyltransferase that catalyzes the 2 O-methylation steps in the ubiquinone biosynthetic pathway. The sequence is that of Ubiquinone biosynthesis O-methyltransferase from Caulobacter sp. (strain K31).